A 265-amino-acid chain; its full sequence is Protein Exd1 homolog (265 aa).

The 3'-5' exonuclease domain occupies 32–82; that stretch reads EKQLDRIVLIYQVDTTYHSALKDIKDQKIISLLVEPSFYGRHHPTSILVVA.

This sequence belongs to the EXD1 family. In terms of assembly, homodimer.

Functionally, RNA-binding protein. Inactive exonuclease. The protein is Protein Exd1 homolog of Drosophila melanogaster (Fruit fly).